Reading from the N-terminus, the 593-residue chain is Mitoguardin 2 (593 aa).

2 helical membrane-spanning segments follow: residues 11–31 (MIQA…TTFG) and 42–62 (PGLR…ALAA). Disordered regions lie at residues 98-134 (PSVK…HSGS), 150-171 (TAAC…TTDG), and 197-229 (VGQR…PESQ). Low complexity-rich tracts occupy residues 106–116 (SRRVQSPSSKS) and 124–134 (SSIEPSKHSGS). A Phosphoserine modification is found at serine 132. Polar residues predominate over residues 205 to 218 (STPTPGDSLQNPDT). Position 206 is a phosphothreonine (threonine 206). Serine 220, serine 224, and serine 228 each carry phosphoserine. A Phosphothreonine modification is found at threonine 273. Phosphoserine occurs at positions 276 and 295. Positions 292–298 (SFFSATE) match the FFAT motif.

Belongs to the mitoguardin family. In terms of assembly, homodimer and heterodimer; forms heterodimers with MIGA1. Interacts with PLD6/MitoPLD. Interacts (via phosphorylated FFAT motif) with MOSPD2. Post-translationally, phosphorylation at Ser-295 of the FFAT motif activates interaction with MOSPD2.

It localises to the mitochondrion outer membrane. Regulator of mitochondrial fusion. Acts by forming homo- and heterodimers at the mitochondrial outer membrane and facilitating the formation of PLD6/MitoPLD dimers. May act by regulating phospholipid metabolism via PLD6/MitoPLD. This is Mitoguardin 2 from Mus musculus (Mouse).